A 369-amino-acid chain; its full sequence is 4-hydroxy-3-methylbut-2-en-1-yl diphosphate synthase (flavodoxin) (369 aa).

4 residues coordinate [4Fe-4S] cluster: Cys270, Cys273, Cys305, and Glu312.

This sequence belongs to the IspG family. The cofactor is [4Fe-4S] cluster.

The enzyme catalyses (2E)-4-hydroxy-3-methylbut-2-enyl diphosphate + oxidized [flavodoxin] + H2O + 2 H(+) = 2-C-methyl-D-erythritol 2,4-cyclic diphosphate + reduced [flavodoxin]. It participates in isoprenoid biosynthesis; isopentenyl diphosphate biosynthesis via DXP pathway; isopentenyl diphosphate from 1-deoxy-D-xylulose 5-phosphate: step 5/6. Its function is as follows. Converts 2C-methyl-D-erythritol 2,4-cyclodiphosphate (ME-2,4cPP) into 1-hydroxy-2-methyl-2-(E)-butenyl 4-diphosphate. The sequence is that of 4-hydroxy-3-methylbut-2-en-1-yl diphosphate synthase (flavodoxin) from Pseudomonas savastanoi pv. phaseolicola (strain 1448A / Race 6) (Pseudomonas syringae pv. phaseolicola (strain 1448A / Race 6)).